The sequence spans 102 residues: Small ribosomal subunit protein uS10 (102 aa).

It belongs to the universal ribosomal protein uS10 family. As to quaternary structure, part of the 30S ribosomal subunit.

Functionally, involved in the binding of tRNA to the ribosomes. In Oenococcus oeni (strain ATCC BAA-331 / PSU-1), this protein is Small ribosomal subunit protein uS10.